A 68-amino-acid polypeptide reads, in one-letter code: Large ribosomal subunit protein bL33c (68 aa).

This sequence belongs to the bacterial ribosomal protein bL33 family.

It localises to the plastid. It is found in the chloroplast. This is Large ribosomal subunit protein bL33c from Piper cenocladum (Ant piper).